We begin with the raw amino-acid sequence, 269 residues long: Putative hydro-lyase Swoo_1731 (269 aa).

The protein belongs to the D-glutamate cyclase family.

This Shewanella woodyi (strain ATCC 51908 / MS32) protein is Putative hydro-lyase Swoo_1731.